The following is a 181-amino-acid chain: Ribonuclease HII (181 aa).

Residues methionine 1–isoleucine 181 form the RNase H type-2 domain. 3 residues coordinate a divalent metal cation: aspartate 6, glutamate 7, and aspartate 98.

This sequence belongs to the RNase HII family. Mn(2+) serves as cofactor. It depends on Mg(2+) as a cofactor.

The protein localises to the cytoplasm. It catalyses the reaction Endonucleolytic cleavage to 5'-phosphomonoester.. In terms of biological role, endonuclease that specifically degrades the RNA of RNA-DNA hybrids. The sequence is that of Ribonuclease HII from Borrelia recurrentis (strain A1).